A 413-amino-acid polypeptide reads, in one-letter code: Queuine tRNA-ribosyltransferase accessory subunit 2 (413 aa).

Residues 298–321 are disordered; that stretch reads LEKSETSGAERNGDVGAESEEPDA. Zn(2+)-binding residues include Cys-349, Cys-351, Cys-354, and His-380.

The protein belongs to the queuine tRNA-ribosyltransferase family. QTRT2 subfamily. Heterodimer of a catalytic subunit qtrt1 and an accessory subunit qtrt2. Requires Zn(2+) as cofactor.

The protein resides in the cytoplasm. The protein localises to the mitochondrion outer membrane. In terms of biological role, non-catalytic subunit of the queuine tRNA-ribosyltransferase (TGT) that catalyzes the base-exchange of a guanine (G) residue with queuine (Q) at position 34 (anticodon wobble position) in tRNAs with GU(N) anticodons (tRNA-Asp, -Asn, -His and -Tyr), resulting in the hypermodified nucleoside queuosine (7-(((4,5-cis-dihydroxy-2-cyclopenten-1-yl)amino)methyl)-7-deazaguanosine). This is Queuine tRNA-ribosyltransferase accessory subunit 2 from Xenopus tropicalis (Western clawed frog).